The sequence spans 346 residues: Methionine import ATP-binding protein MetN 1 (346 aa).

An ABC transporter domain is found at 2 to 241; the sequence is IELKNVSKVF…PQHVTTKKFV (240 aa). Position 38–45 (38–45) interacts with ATP; it reads GYSGAGKS.

Belongs to the ABC transporter superfamily. Methionine importer (TC 3.A.1.24) family. As to quaternary structure, the complex is composed of two ATP-binding proteins (MetN), two transmembrane proteins (MetI) and a solute-binding protein (MetQ).

Its subcellular location is the cell membrane. The enzyme catalyses L-methionine(out) + ATP + H2O = L-methionine(in) + ADP + phosphate + H(+). It carries out the reaction D-methionine(out) + ATP + H2O = D-methionine(in) + ADP + phosphate + H(+). Part of the ABC transporter complex MetNIQ involved in methionine import. Responsible for energy coupling to the transport system. In Bacillus anthracis, this protein is Methionine import ATP-binding protein MetN 1.